Here is a 547-residue protein sequence, read N- to C-terminus: Riboflavin transporter RibJ (547 aa).

At 1–11 (MLPSFTRKPAD) the chain is on the cytoplasmic side. The chain crosses the membrane as a helical span at residues 12-32 (HPIGYLVALSGLLMQLMSYGI). Residues 33–58 (DNSYSIFSEDMHNDPSLGFPSITAIS) lie on the Extracellular side of the membrane. The chain crosses the membrane as a helical span at residues 59–79 (LGNSVSLGLSPAFGVLAGFCV). Residues 80 to 85 (DRLPPR) are Cytoplasmic-facing. Residues 86–106 (FMMALSTILLFTGLWISSTLA) form a helical membrane-spanning segment. The Extracellular segment spans residues 107–108 (AN). Residues 109-129 (IYVVTFTYCLFASIGTACMLS) form a helical membrane-spanning segment. Residues 130 to 144 (PGAAATSSWFNRYQG) lie on the Cytoplasmic side of the membrane. Residues 145 to 165 (LAMGINFAGGGIGSAIIPPLA) traverse the membrane as a helical segment. The Extracellular segment spans residues 166-175 (GKWVVAYGWR). A helical transmembrane segment spans residues 176-196 (KAFQLMSIFCAIGVLATALSA). Over 197-344 (RRREPKRDDS…MFTLPFMGNF (148 aa)) the chain is Cytoplasmic. The interval 198–293 (RREPKRDDSS…EGLDVTEQSQ (96 aa)) is disordered. The span at 244-255 (NEGKEDVREMGR) shows a compositional bias: basic and acidic residues. A helical transmembrane segment spans residues 345-365 (LCWFIYSWAFYSLIYAAVPYI). The Extracellular segment spans residues 366–386 (SSMGKPGTVYAGVPPIPTDVA). A helical membrane pass occupies residues 387–407 (ATLFTFYGVFQVVGSVLVGWL). The Cytoplasmic segment spans residues 408-412 (ASLVT). Residues 413–433 (AEFAYVFCATVGGIGCGLLAL) form a helical membrane-spanning segment. At 434–437 (GRSY) the chain is on the extracellular side. Residues 438 to 458 (VAFALLLCIIGFCMAGMFAVM) form a helical membrane-spanning segment. Topologically, residues 459–470 (PTLIATHLYGPN) are cytoplasmic. Residues 471-491 (LGFYFGAVFLAGVVGGFVAPP) form a helical membrane-spanning segment. At 492 to 505 (MQATIQLRNNGSYA) the chain is on the extracellular side. Asn501 carries an N-linked (GlcNAc...) asparagine glycan. Residues 506 to 526 (FVCVVMSVSMTLSALVCYATL) form a helical membrane-spanning segment. Residues 527 to 547 (WRSKRSGIVLAARKTKLVEIM) are Cytoplasmic-facing.

It belongs to the major facilitator superfamily. RibJ family.

Its subcellular location is the cell membrane. Its function is as follows. Transporter involved in riboflavin (vitamin B2) uptake. Also transports FMN and FAD. This chain is Riboflavin transporter RibJ, found in Trypanosoma brucei brucei (strain 927/4 GUTat10.1).